A 396-amino-acid polypeptide reads, in one-letter code: Dual specificity mitogen-activated protein kinase kinase dSOR1 (396 aa).

The tract at residues 25–44 is disordered; the sequence is APTPPFKTPSGTDTHSLLGK. Residues 87 to 364 enclose the Protein kinase domain; the sequence is LEKLGELGSG…LKTLLSHPWI (278 aa). ATP-binding positions include 93–101 and Lys-116; that span reads LGSGNGGVV. Catalysis depends on Asp-209, which acts as the Proton acceptor. Residues Ser-237 and Ser-241 each carry the phosphoserine; by RAF modification.

This sequence belongs to the protein kinase superfamily. STE Ser/Thr protein kinase family. MAP kinase kinase subfamily. As to quaternary structure, interacts with Raf and ksr; Dsor1 binding to ksr probably promotes ksr and Raf dimerization and ksr-mediated Raf transactivation. Phosphorylation on Ser/Thr by MAP kinase kinase kinases regulates positively the kinase activity.

The catalysed reaction is L-seryl-[protein] + ATP = O-phospho-L-seryl-[protein] + ADP + H(+). It carries out the reaction L-threonyl-[protein] + ATP = O-phospho-L-threonyl-[protein] + ADP + H(+). It catalyses the reaction L-tyrosyl-[protein] + ATP = O-phospho-L-tyrosyl-[protein] + ADP + H(+). Required downstream of Raf in the sevenless (sev), torso (tor), and Drosophila EGF receptor homolog (DER) signal transduction pathways. Involved in both positive regulation (at the posterior terminus) and negative regulation (at the anterior domain) of tll, as in other terminal class gene products, maybe via the ERK-A kinase. The protein is Dual specificity mitogen-activated protein kinase kinase dSOR1 (Dsor1) of Drosophila melanogaster (Fruit fly).